The following is a 378-amino-acid chain: Chlorophyll synthase, chloroplastic (378 aa).

The transit peptide at 1-45 directs the protein to the chloroplast; sequence MATSHPLAAAAATSSSSATFRPPLRFLSSPPSSLTLNRRRSFPVV. The next 7 helical transmembrane spans lie at 173-193, 199-219, 232-252, 257-277, 302-322, 327-347, and 357-377; these read VITQ…LLDI, FPII…YSAP, FALG…LFGT, IVVL…VNDF, WICV…LLST, YALA…QYFL, and YQAS…LATS.

This sequence belongs to the UbiA prenyltransferase family. Chlorophyll synthase subfamily. Mg(2+) is required as a cofactor. The cofactor is Zn(2+). It depends on Mn(2+) as a cofactor.

It localises to the plastid. Its subcellular location is the chloroplast membrane. The catalysed reaction is phytyl diphosphate + chlorophyllide a + H(+) = chlorophyll a + diphosphate. With respect to regulation, inhibited by N-phenylmaleimide (NPM) and diacetyl. Functionally, involved in one of the last steps of the biosynthesis of chlorophyll a. Catalyzes the esterification of chlorophillide a with either geranylgeranyldiphosphate (GGPP) or phytyldiphosphate (PhyPP). May also use with a lower efficiency the monophosphates GGMP and PhyMP, but not the non-phosphorylated alcohols geranylgeraniol and phytol. The tetraprenyl diphosphate must bind to the enzyme as the first substrate and esterification occurs when this pre-loaded enzyme meets the second substrate, chlorophyllide. The polypeptide is Chlorophyll synthase, chloroplastic (CHLG) (Avena sativa (Oat)).